The sequence spans 586 residues: Dihydroxy-acid dehydratase 2 (586 aa).

Cys68 is a binding site for [2Fe-2S] cluster. Asp100 lines the Mg(2+) pocket. Cys141 lines the [2Fe-2S] cluster pocket. Positions 142 and 143 each coordinate Mg(2+). The residue at position 143 (Lys143) is an N6-carboxylysine. Residue Cys213 coordinates [2Fe-2S] cluster. Glu463 lines the Mg(2+) pocket. Ser489 serves as the catalytic Proton acceptor.

It belongs to the IlvD/Edd family. Homodimer. It depends on [2Fe-2S] cluster as a cofactor. Mg(2+) is required as a cofactor.

It catalyses the reaction (2R)-2,3-dihydroxy-3-methylbutanoate = 3-methyl-2-oxobutanoate + H2O. The catalysed reaction is (2R,3R)-2,3-dihydroxy-3-methylpentanoate = (S)-3-methyl-2-oxopentanoate + H2O. It participates in amino-acid biosynthesis; L-isoleucine biosynthesis; L-isoleucine from 2-oxobutanoate: step 3/4. It functions in the pathway amino-acid biosynthesis; L-valine biosynthesis; L-valine from pyruvate: step 3/4. Its function is as follows. Functions in the biosynthesis of branched-chain amino acids. Catalyzes the dehydration of (2R,3R)-2,3-dihydroxy-3-methylpentanoate (2,3-dihydroxy-3-methylvalerate) into 2-oxo-3-methylpentanoate (2-oxo-3-methylvalerate) and of (2R)-2,3-dihydroxy-3-methylbutanoate (2,3-dihydroxyisovalerate) into 2-oxo-3-methylbutanoate (2-oxoisovalerate), the penultimate precursor to L-isoleucine and L-valine, respectively. The chain is Dihydroxy-acid dehydratase 2 from Mesorhizobium japonicum (strain LMG 29417 / CECT 9101 / MAFF 303099) (Mesorhizobium loti (strain MAFF 303099)).